We begin with the raw amino-acid sequence, 284 residues long: MAFGKSKNRRRQDAAQQKEAVRGAVRSQGPRALKVLGLTLGTGLLVWGGAALREWTLTSPRFELEAVSFSGLQRASRVELLRLAALTKGQNLWTLDVDALERAMDQHPWLRTVEVTRRFPNRVSVEVTEHTPVAMAVLGELYVLDEEGEPFKRVTPGDGLDLPLVTGLDREGYVADPAAARERLRSALAVASAYARLSPDQAEQLSEVRLEAQSLALVTASGQEVRLGEGDSEVKLQRLARVRRELGARGLAAEIIHLDNRARPGWVAVKISSPASERSGASMR.

The span at 1–10 shows a compositional bias: basic residues; it reads MAFGKSKNRR. Residues 1-23 are disordered; that stretch reads MAFGKSKNRRRQDAAQQKEAVRG. Topologically, residues 1–34 are cytoplasmic; sequence MAFGKSKNRRRQDAAQQKEAVRGAVRSQGPRALK. Residues 35–52 traverse the membrane as a helical segment; it reads VLGLTLGTGLLVWGGAAL. Residues 53–284 are Periplasmic-facing; sequence REWTLTSPRF…ASERSGASMR (232 aa). The POTRA domain occupies 62–130; it reads FELEAVSFSG…NRVSVEVTEH (69 aa).

The protein belongs to the FtsQ/DivIB family. FtsQ subfamily.

It localises to the cell inner membrane. Its function is as follows. Essential cell division protein. This Myxococcus fulvus (strain ATCC BAA-855 / HW-1) protein is Cell division protein FtsQ.